The primary structure comprises 251 residues: Octanoyltransferase (251 aa).

One can recognise a BPL/LPL catalytic domain in the interval 49-230 (DEIPDQLLIL…ALDDALAGRL (182 aa)). Residues 87 to 94 (RGGRITWH), 160 to 162 (AIG), and 173 to 175 (GVA) contribute to the substrate site. The active-site Acyl-thioester intermediate is the C191.

The protein belongs to the LipB family.

It localises to the cytoplasm. It catalyses the reaction octanoyl-[ACP] + L-lysyl-[protein] = N(6)-octanoyl-L-lysyl-[protein] + holo-[ACP] + H(+). It participates in protein modification; protein lipoylation via endogenous pathway; protein N(6)-(lipoyl)lysine from octanoyl-[acyl-carrier-protein]: step 1/2. Its function is as follows. Catalyzes the transfer of endogenously produced octanoic acid from octanoyl-acyl-carrier-protein onto the lipoyl domains of lipoate-dependent enzymes. Lipoyl-ACP can also act as a substrate although octanoyl-ACP is likely to be the physiological substrate. This chain is Octanoyltransferase, found in Corynebacterium glutamicum (strain R).